The chain runs to 80 residues: MKRILIAPVRFYQRFISPVFPPSCRFELTCSNYMIQAIEKHGFKGVLMGLSRILRCHPWSKTGKDPVPDRFSLKRNQEGE.

A disordered region spans residues 61–80; the sequence is KTGKDPVPDRFSLKRNQEGE. Residues 62 to 80 are compositionally biased toward basic and acidic residues; the sequence is TGKDPVPDRFSLKRNQEGE.

This sequence belongs to the UPF0161 family.

The protein localises to the cell membrane. Functionally, could be involved in insertion of integral membrane proteins into the membrane. In Streptococcus pneumoniae (strain P1031), this protein is Putative membrane protein insertion efficiency factor.